The primary structure comprises 1520 residues: Integrator complex subunit 3 homolog (1520 aa).

6 disordered regions span residues 1–23, 523–671, 689–801, 813–922, 1116–1177, and 1489–1520; these read MMNQQQQQQQPPTTSPTQQQQLT, QLHS…NSRV, VISQ…SPST, DEPP…QNIK, FSNS…NITN, and QSSNIKNDNNPTLSKHQNSDDDSNPKKRFRKE. Composition is skewed to low complexity over residues 527 to 549 and 557 to 595; these read QQQQLQQQQLQQPQQPQQQQQPP and QPINKQLPLQMSPQQQSQQQLQQQQLQQQLQQQQQQQQP. The span at 596-612 shows a compositional bias: pro residues; that stretch reads PQQPPPQQQPQQQPPQQ. The span at 613–625 shows a compositional bias: low complexity; the sequence is QPQQQPQQQQPQL. Over residues 626–639 the composition is skewed to polar residues; that stretch reads NISTGNLPNIQQPM. Low complexity-rich tracts occupy residues 642–669, 694–717, and 725–735; these read SPPLSSNTLVSPTSSSSPTSSNLPTNNS, PQSQQTPSLHSSSQSVLQQKSPPL, and QQQPSQQLPSQ. Residues 736-752 are compositionally biased toward polar residues; the sequence is IVKNSPPNLSMTNENIS. The segment covering 768-789 has biased composition (low complexity); it reads SPLINSSNSNITTPNPDSQSQI. Polar residues predominate over residues 819–828; the sequence is SKSSPTQSNI. Residues 837–882 show a composition bias toward low complexity; it reads PPQTTISSSSPLLQPQTQPQPQTQPQPQTLQQSTTPSLSSSSTPTI. A compositionally biased stretch (pro residues) spans 898-918; it reads QPPPPPPSSQPLQPPPPPPPS. 2 stretches are compositionally biased toward low complexity: residues 1116–1130 and 1137–1177; these read FSNSDDNESTNNNNN and QQQQ…NITN. Positions 1489 to 1504 are enriched in polar residues; sequence QSSNIKNDNNPTLSKH.

The protein belongs to the Integrator subunit 3 family. In terms of assembly, component of the Integrator complex. The core complex associates with protein phosphatase 2A subunits, to form the Integrator-PP2A (INTAC) complex. Component of the SOSS complex.

The protein localises to the nucleus. The protein resides in the cytoplasm. In terms of biological role, component of the integrator complex, a multiprotein complex that terminates RNA polymerase II (Pol II) transcription in the promoter-proximal region of genes. The integrator complex provides a quality checkpoint during transcription elongation by driving premature transcription termination of transcripts that are unfavorably configured for transcriptional elongation: the complex terminates transcription by (1) catalyzing dephosphorylation of the C-terminal domain (CTD) of Pol II subunit polr2a, (2) degrading the exiting nascent RNA transcript via endonuclease activity and (3) promoting the release of Pol II from bound DNA. The integrator complex is also involved in terminating the synthesis of non-coding Pol II transcripts, such as enhancer RNAs (eRNAs), small nuclear RNAs (snRNAs), telomerase RNAs and long non-coding RNAs (lncRNAs). Its function is as follows. Component of the SOSS complex, a multiprotein complex that functions downstream of the MRN complex to promote DNA repair and G2/M checkpoint. The SOSS complex associates with single-stranded DNA at DNA lesions and influences diverse endpoints in the cellular DNA damage response including cell-cycle checkpoint activation, recombinational repair and maintenance of genomic stability. The SOSS complex is required for efficient homologous recombination-dependent repair of double-strand breaks (DSBs) and ATM-dependent signaling pathways. In the SOSS complex, it is required for the assembly of the complex and for stabilization of the complex at DNA damage sites. This Dictyostelium discoideum (Social amoeba) protein is Integrator complex subunit 3 homolog (ints3).